The chain runs to 488 residues: Cis-aconitate decarboxylase (488 aa).

Belongs to the PrpD family. In terms of assembly, homodimer. As to expression, expressed in LPS-tolerized macrophages (at protein level). Expressed in the luminal epithelial cells of pregnant uterus. Expressed in microglia and macrophage cells.

Its subcellular location is the mitochondrion. The catalysed reaction is cis-aconitate + H(+) = itaconate + CO2. Cis-aconitate decarboxylase that catalyzes production of itaconate and is involved in the inhibition of the inflammatory response. Acts as a negative regulator of the Toll-like receptors (TLRs)-mediated inflammatory innate response by stimulating the tumor necrosis factor alpha-induced protein TNFAIP3 expression via reactive oxygen species (ROS) in LPS-tolerized macrophages. Involved in antimicrobial response of innate immune cells; ACOD1-mediated itaconic acid production contributes to the antimicrobial activity of macrophages by generating itaconate, leading to alkylation of proteins, such as TFEB. Involved in antiviral response following infection by flavivirus in neurons: ACOD1-mediated itaconate production inhibits the activity of succinate dehydrogenase, generating a metabolic state in neurons that suppresses replication of viral genomes. Plays a role in the embryo implantation. This is Cis-aconitate decarboxylase from Mus musculus (Mouse).